A 186-amino-acid chain; its full sequence is Ribulose bisphosphate carboxylase small subunit, chloroplastic 6 (186 aa).

The N-terminal 60 residues, 1–60 (MASSMLSNAAVATTAASRSAGAQASMVAPFTGLKSVSAFPVTRKSSNDLSTVPSNGGKVQ), are a transit peptide targeting the chloroplast.

The protein belongs to the RuBisCO small chain family. As to quaternary structure, heterohexadecamer of 8 large and 8 small subunits.

It is found in the plastid. It localises to the chloroplast. In terms of biological role, ruBisCO catalyzes two reactions: the carboxylation of D-ribulose 1,5-bisphosphate, the primary event in carbon dioxide fixation, as well as the oxidative fragmentation of the pentose substrate. Both reactions occur simultaneously and in competition at the same active site. Although the small subunit is not catalytic it is essential for maximal activity. The protein is Ribulose bisphosphate carboxylase small subunit, chloroplastic 6 of Mesembryanthemum crystallinum (Common ice plant).